The chain runs to 153 residues: MLNKCFIKNYNYNIQLVRYIESKHSNTFQIIKDYMDTLVYSVKSKFDDYDIALLTMLFETKRMSQNTKVKRVYLYNSYSFIHQNYITALLKEAFKGVIEIVEKDTLNLTYEGLQKKNVDIIISNVKLEIKDIPVVQISDMPTDKELSKIKKLL.

This sequence belongs to the AtxA/AcpA family.

The polypeptide is Putative trans-acting regulator pXO2-62/BXB0076/GBAA_pXO2_0076 (Bacillus anthracis).